Reading from the N-terminus, the 277-residue chain is 4-hydroxy-tetrahydrodipicolinate reductase (277 aa).

NAD(+)-binding positions include 11 to 16 (GALGRM) and 110 to 112 (GTT). Catalysis depends on histidine 166, which acts as the Proton donor/acceptor. Residue histidine 167 coordinates (S)-2,3,4,5-tetrahydrodipicolinate. Lysine 170 acts as the Proton donor in catalysis. (S)-2,3,4,5-tetrahydrodipicolinate is bound at residue 176–177 (GT).

The protein belongs to the DapB family.

The protein resides in the cytoplasm. It carries out the reaction (S)-2,3,4,5-tetrahydrodipicolinate + NAD(+) + H2O = (2S,4S)-4-hydroxy-2,3,4,5-tetrahydrodipicolinate + NADH + H(+). The catalysed reaction is (S)-2,3,4,5-tetrahydrodipicolinate + NADP(+) + H2O = (2S,4S)-4-hydroxy-2,3,4,5-tetrahydrodipicolinate + NADPH + H(+). Its pathway is amino-acid biosynthesis; L-lysine biosynthesis via DAP pathway; (S)-tetrahydrodipicolinate from L-aspartate: step 4/4. Its function is as follows. Catalyzes the conversion of 4-hydroxy-tetrahydrodipicolinate (HTPA) to tetrahydrodipicolinate. This Synechococcus sp. (strain CC9902) protein is 4-hydroxy-tetrahydrodipicolinate reductase.